Reading from the N-terminus, the 28-residue chain is Potassium channel toxin alpha-KTx 9.5 (28 aa).

Intrachain disulfides connect Cys3–Cys19, Cys6–Cys24, and Cys10–Cys26. Val28 bears the Valine amide mark.

In terms of tissue distribution, expressed by the venom gland.

The protein resides in the secreted. Blocks voltage-gated potassium channels Kv1.1/KCNA1 (IC(50)=145 nM), Kv1.2/KCNA2 (IC(50)=2.5 nM), and Kv1.3/KCNA3 (IC(50)=15). Also inhibits calcium-activated potassium channels (KCa/KCNN). In Buthus occitanus tunetanus (Common European scorpion), this protein is Potassium channel toxin alpha-KTx 9.5.